The primary structure comprises 302 residues: Recombination-associated protein RdgC (302 aa).

Belongs to the RdgC family.

Its subcellular location is the cytoplasm. It is found in the nucleoid. In terms of biological role, may be involved in recombination. The protein is Recombination-associated protein RdgC of Xylella fastidiosa (strain M12).